A 355-amino-acid polypeptide reads, in one-letter code: tRNA N6-adenosine threonylcarbamoyltransferase (355 aa).

Positions 110 and 114 each coordinate Fe cation. Substrate is bound by residues 132–136 (LVSGG), D165, G178, D182, and N288. A Fe cation-binding site is contributed by D316.

This sequence belongs to the KAE1 / TsaD family. The cofactor is Fe(2+).

Its subcellular location is the cytoplasm. The enzyme catalyses L-threonylcarbamoyladenylate + adenosine(37) in tRNA = N(6)-L-threonylcarbamoyladenosine(37) in tRNA + AMP + H(+). Its function is as follows. Required for the formation of a threonylcarbamoyl group on adenosine at position 37 (t(6)A37) in tRNAs that read codons beginning with adenine. Is involved in the transfer of the threonylcarbamoyl moiety of threonylcarbamoyl-AMP (TC-AMP) to the N6 group of A37, together with TsaE and TsaB. TsaD likely plays a direct catalytic role in this reaction. The polypeptide is tRNA N6-adenosine threonylcarbamoyltransferase (Lawsonia intracellularis (strain PHE/MN1-00)).